Reading from the N-terminus, the 159-residue chain is Phosphopantetheine adenylyltransferase (159 aa).

Thr-10 provides a ligand contact to substrate. Residues 10 to 11 (TF) and His-18 contribute to the ATP site. Residues Lys-42, Met-74, and Arg-88 each coordinate substrate. Residues 89–91 (GLR), Glu-99, and 124–130 (WSFISSS) contribute to the ATP site.

The protein belongs to the bacterial CoaD family. In terms of assembly, homohexamer. Mg(2+) is required as a cofactor.

The protein resides in the cytoplasm. It carries out the reaction (R)-4'-phosphopantetheine + ATP + H(+) = 3'-dephospho-CoA + diphosphate. It participates in cofactor biosynthesis; coenzyme A biosynthesis; CoA from (R)-pantothenate: step 4/5. Reversibly transfers an adenylyl group from ATP to 4'-phosphopantetheine, yielding dephospho-CoA (dPCoA) and pyrophosphate. This Shigella dysenteriae serotype 1 (strain Sd197) protein is Phosphopantetheine adenylyltransferase.